The chain runs to 431 residues: Divalent metal cation transporter MntH (431 aa).

12 consecutive transmembrane segments (helical) span residues 30–50 (WSWT…IDPG), 63–83 (GYTL…IQTL), 106–126 (PLVW…DLAE), 137–159 (LFGL…ALHL), 169–189 (ILIG…LVLS), 209–229 (YALY…VIYL), 257–277 (VILG…MAAA), 287–307 (VATI…VTAS), 309–329 (VFGL…TLSG), 341–361 (IPLW…IMLG), 367–387 (ALVA…VPLL), and 405–425 (VTGV…YVLF).

The protein belongs to the NRAMP family.

Its subcellular location is the cell inner membrane. In terms of biological role, h(+)-stimulated, divalent metal cation uptake system. This chain is Divalent metal cation transporter MntH, found in Chromohalobacter salexigens (strain ATCC BAA-138 / DSM 3043 / CIP 106854 / NCIMB 13768 / 1H11).